The chain runs to 465 residues: MESLKIYNTLAREKQTFVPIEPGRVRMYVCGMTVYDYCHVGHARVMVVFDMVQRWLRASGYDVTYVRNITDIDDKIIKRAVENGETIGALTNRFIAAMHEDADALGVQRPDREPRATEYVPQMLSMIGRLQDNGLAYQAADGDVNYAVRKFPGYGKLSGKSLEDLRAGERVAANDAKQDPLDFVLWKSAKADEPAESRWASPWGEGRPGWHIECSAMSCDLLGTHFDLHGGGADLQFPHHENEIAQSEGASGSTFVNTWMHNGFVRVNDEKMSKSLGNFFTIRDVLKVYDPEVVRFFILRSHYRSDLNYSDVHLDDARHALTRLYTALKDVPAEAQARPDWNEPHGKRFREAMHDDFNTPVAMAVLFELATEVNKTRSPALASQLAALGGVMGLLVRDPHAFLQGGVGAAADGLDAAEVEARIEARRAAKAARDFARADGIRADLLAAGIVLEDKPGGVTEWRRA.

Zn(2+) is bound at residue Cys30. The 'HIGH' region motif lies at 32–42 (MTVYDYCHVGH). 3 residues coordinate Zn(2+): Cys214, His239, and Glu243. The 'KMSKS' region motif lies at 271–275 (KMSKS). Lys274 serves as a coordination point for ATP.

It belongs to the class-I aminoacyl-tRNA synthetase family. Monomer. It depends on Zn(2+) as a cofactor.

Its subcellular location is the cytoplasm. The enzyme catalyses tRNA(Cys) + L-cysteine + ATP = L-cysteinyl-tRNA(Cys) + AMP + diphosphate. This chain is Cysteine--tRNA ligase, found in Ralstonia nicotianae (strain ATCC BAA-1114 / GMI1000) (Ralstonia solanacearum).